The sequence spans 437 residues: Adenylyltransferase and sulfurtransferase MOCS3 (437 aa).

ATP-binding positions include Gly82, Asp103, 110 to 114, Lys127, and 171 to 172; these read TNLHR and DN. 2 residues coordinate Zn(2+): Cys212 and Cys215. Cys229 functions as the Glycyl thioester intermediate; for adenylyltransferase activity in the catalytic mechanism. Zn(2+)-binding residues include Cys287 and Cys290. The Rhodanese domain occupies 337 to 435; that stretch reads SNVPHLLVDV…WTHNIDPEFP (99 aa). Catalysis depends on Cys391, which acts as the Cysteine persulfide intermediate; for sulfurtransferase activity.

This sequence in the N-terminal section; belongs to the HesA/MoeB/ThiF family. UBA4 subfamily. The cofactor is Zn(2+).

The protein resides in the cytoplasm. The protein localises to the cytosol. It carries out the reaction [molybdopterin-synthase sulfur-carrier protein]-C-terminal Gly-Gly + ATP + H(+) = [molybdopterin-synthase sulfur-carrier protein]-C-terminal Gly-Gly-AMP + diphosphate. The enzyme catalyses [molybdopterin-synthase sulfur-carrier protein]-C-terminal Gly-Gly-AMP + S-sulfanyl-L-cysteinyl-[cysteine desulfurase] + AH2 = [molybdopterin-synthase sulfur-carrier protein]-C-terminal-Gly-aminoethanethioate + L-cysteinyl-[cysteine desulfurase] + A + AMP + 2 H(+). It functions in the pathway tRNA modification; 5-methoxycarbonylmethyl-2-thiouridine-tRNA biosynthesis. Its pathway is cofactor biosynthesis; molybdopterin biosynthesis. In terms of biological role, plays a central role in 2-thiolation of mcm(5)S(2)U at tRNA wobble positions of cytosolic tRNA(Lys), tRNA(Glu) and tRNA(Gln). Also essential during biosynthesis of the molybdenum cofactor. Acts by mediating the C-terminal thiocarboxylation of sulfur carriers URM1 and MOCS2A. Its N-terminus first activates URM1 and MOCS2A as acyl-adenylates (-COAMP), then the persulfide sulfur on the catalytic cysteine is transferred to URM1 and MOCS2A to form thiocarboxylation (-COSH) of their C-terminus. The reaction probably involves hydrogen sulfide that is generated from the persulfide intermediate and that acts as a nucleophile towards URM1 and MOCS2A. Subsequently, a transient disulfide bond is formed. Does not use thiosulfate as sulfur donor; NFS1 probably acting as a sulfur donor for thiocarboxylation reactions. This Aedes aegypti (Yellowfever mosquito) protein is Adenylyltransferase and sulfurtransferase MOCS3.